The following is a 175-amino-acid chain: uncharacterized protein (175 aa).

This is an uncharacterized protein from Archaeoglobus fulgidus (strain ATCC 49558 / DSM 4304 / JCM 9628 / NBRC 100126 / VC-16).